Consider the following 382-residue polypeptide: Cytochrome b (382 aa).

4 helical membrane-spanning segments follow: residues 28–48 (YGFLLGIIFFIQILTGVFLAS), 72–94 (WCFRYMHATGASLVFLLTYLHIL), 107–127 (SWISGLIIFALFIVTAFIGYV), and 169–189 (FFVLHFILPFVALCIVFIHIF). Positions 78 and 92 each coordinate heme b. The heme b site is built by His-173 and His-187. Residue His-192 participates in a ubiquinone binding. A run of 4 helical transmembrane segments spans residues 214–234 (LLSLDVKGFNNIFILFLLQSI), 274–294 (IPSKTAGLLIVLASLQLLFLL), 317–337 (VPMIWFMCSFYALLWIGCQLP), and 340–360 (IFILYGRLFIISFFSSGLFAL).

This sequence belongs to the cytochrome b family. The main subunits of complex b-c1 are: cytochrome b, cytochrome c1 and the Rieske protein. Requires heme b as cofactor.

The protein localises to the mitochondrion inner membrane. In terms of biological role, component of the ubiquinol-cytochrome c reductase complex (complex III or cytochrome b-c1 complex) that is part of the mitochondrial respiratory chain. The b-c1 complex mediates electron transfer from ubiquinol to cytochrome c. Contributes to the generation of a proton gradient across the mitochondrial membrane that is then used for ATP synthesis. The sequence is that of Cytochrome b (MT-CYB) from Plasmodium vivax (strain Salvador I).